Here is a 2517-residue protein sequence, read N- to C-terminus: Serine/threonine-protein kinase ATR (2517 aa).

The stretch at 1178–1214 is one HEAT repeat; the sequence is EPMLEQIVNVLMAGCQHDDSQLQMASAKCLGELGAID. The FAT domain maps to 1509–2066; the sequence is LVSRASYNCG…LWMLLPHFKS (558 aa). Serine 1569 bears the Phosphoserine mark. Tyrosine 1570 bears the Phosphotyrosine mark. A Phosphoserine modification is found at serine 1573. Threonine 1575 is subject to Phosphothreonine. In terms of domain architecture, PI3K/PI4K catalytic spans 2184-2508; sequence FQESVLILRS…EATKVDNLAS (325 aa). The segment at 2190–2196 is G-loop; the sequence is ILRSAAK. The interval 2360-2368 is catalytic loop; that stretch reads GLGDRHGEN. The interval 2380–2404 is activation loop; sequence HVDFNCLFNQGELLPYPEVVPFRLT. Residues 2485 to 2517 form the FATC domain; the sequence is IPLSTEGQVNFLINEATKVDNLASMYIGWGAFL.

Belongs to the PI3/PI4-kinase family. ATM subfamily. As to quaternary structure, interacts with mus304. The cofactor is Mn(2+).

The protein localises to the nucleus. It carries out the reaction L-seryl-[protein] + ATP = O-phospho-L-seryl-[protein] + ADP + H(+). The catalysed reaction is L-threonyl-[protein] + ATP = O-phospho-L-threonyl-[protein] + ADP + H(+). In terms of biological role, serine/threonine protein kinase which activates checkpoint signaling upon genotoxic stresses such as ionizing radiation (IR), ultraviolet light (UV), or DNA replication stalling, thereby acting as a DNA damage sensor. Recognizes the substrate consensus sequence [ST]-Q. Phosphorylates various proteins, which collectively inhibits DNA replication and mitosis and promotes DNA repair and recombination. Phosphorylates grp/CHK1. Phosphorylates 'Ser-137' of histone variant H2AX/H2AV at sites of DNA damage, thereby regulating DNA damage response mechanism. Essential for the DNA damage checkpoint in larval imaginal disks and neuroblasts and for the DNA replication checkpoint in the embryo. Also has an essential role during early nuclear divisions in embryos, where it is required to delay mitosis in response to incomplete DNA replication. Also plays an important role during meiosis, where it may monitor double-strand-break repair during meiotic crossing over, to regulate the progression of prophase I, and to enforce metaphase I delay observed at the end of oogenesis. Involved in telomere maintenance and prevention of telomere fusion; potentially functioning downstream of moi/modigliani. This is Serine/threonine-protein kinase ATR (mei-41) from Drosophila melanogaster (Fruit fly).